The following is a 60-amino-acid chain: Small ribosomal subunit protein eS31 (60 aa).

Zn(2+)-binding residues include cysteine 24, cysteine 27, cysteine 42, and cysteine 45. The segment at 24-45 (CPRCGPGVFMADHGNRYACGRC) adopts a C4-type zinc-finger fold.

Belongs to the eukaryotic ribosomal protein eS31 family. As to quaternary structure, part of the 30S ribosomal subunit. Zn(2+) is required as a cofactor.

This chain is Small ribosomal subunit protein eS31, found in Methanopyrus kandleri (strain AV19 / DSM 6324 / JCM 9639 / NBRC 100938).